A 187-amino-acid polypeptide reads, in one-letter code: Probable chorismate pyruvate-lyase (187 aa).

Positions 80, 118, and 170 each coordinate substrate.

It belongs to the UbiC family.

It localises to the cytoplasm. The enzyme catalyses chorismate = 4-hydroxybenzoate + pyruvate. It functions in the pathway cofactor biosynthesis; ubiquinone biosynthesis. Its function is as follows. Removes the pyruvyl group from chorismate, with concomitant aromatization of the ring, to provide 4-hydroxybenzoate (4HB) for the ubiquinone pathway. The chain is Probable chorismate pyruvate-lyase from Pseudomonas fluorescens (strain ATCC BAA-477 / NRRL B-23932 / Pf-5).